The following is an 86-amino-acid chain: Bradykinin-potentiating peptide 25.12 (86 aa).

Residues 1-22 (MNKRVLLVIFFVTLLIADEVNS) form the signal peptide. Residues 67–86 (APAAAAAPEEPPVEQRRRRR) form a disordered region.

It belongs to the non-disulfide-bridged peptide (NDBP) superfamily. Long chain multifunctional peptide (group 2) family. In terms of tissue distribution, expressed by the venom gland.

The protein localises to the secreted. Functionally, inhibits angiotensin-converting enzyme (ACE), but does not serve as substrate for the enzyme. Potentiates bradykinin (BK) on the isolated guinea pig ileum as well as the isolated rat uterus for contraction. Also potentiates in vivo the depressor effect of BK on arterial blood pressure in the normotensive anesthetized rat. This Lychas mucronatus (Chinese swimming scorpion) protein is Bradykinin-potentiating peptide 25.12.